A 240-amino-acid polypeptide reads, in one-letter code: 1-(5-phosphoribosyl)-5-[(5-phosphoribosylamino)methylideneamino] imidazole-4-carboxamide isomerase (240 aa).

Asp8 functions as the Proton acceptor in the catalytic mechanism. Residue Asp129 is the Proton donor of the active site.

This sequence belongs to the HisA/HisF family.

Its subcellular location is the cytoplasm. The catalysed reaction is 1-(5-phospho-beta-D-ribosyl)-5-[(5-phospho-beta-D-ribosylamino)methylideneamino]imidazole-4-carboxamide = 5-[(5-phospho-1-deoxy-D-ribulos-1-ylimino)methylamino]-1-(5-phospho-beta-D-ribosyl)imidazole-4-carboxamide. Its pathway is amino-acid biosynthesis; L-histidine biosynthesis; L-histidine from 5-phospho-alpha-D-ribose 1-diphosphate: step 4/9. The polypeptide is 1-(5-phosphoribosyl)-5-[(5-phosphoribosylamino)methylideneamino] imidazole-4-carboxamide isomerase (Caldanaerobacter subterraneus subsp. tengcongensis (strain DSM 15242 / JCM 11007 / NBRC 100824 / MB4) (Thermoanaerobacter tengcongensis)).